The following is a 398-amino-acid chain: Cation channel sperm-associated protein 3 (398 aa).

Topologically, residues 1–48 (MSQHRHQRHSRVISSSPVDTTSVGFCPTFKKFKRNDDECRAFVKRVIM) are cytoplasmic. A helical membrane pass occupies residues 49 to 71 (SRFFKIIMISTVTSNAFFMALWT). The Extracellular portion of the chain corresponds to 72–80 (SYDIRYRLF). Residues 81 to 107 (RLLEFSEIFFVSICTSELSMKVYVDPI) form a helical membrane-spanning segment. Asn108 is a topological domain (cytoplasmic). The chain crosses the membrane as a helical span at residues 109 to 131 (YWKNGYNLLDVIIIIVMFLPYAL). The Extracellular portion of the chain corresponds to 132–143 (RQLMGKQFTYLY). Residues 144-160 (IADGMQSLRILKLIGYS) traverse the membrane as a helical segment. Residues 161–168 (QGIRTLIT) are Cytoplasmic-facing. Residues 169–195 (AVGQTVYTVASVLLLLFLLMYIFAILG) form a helical membrane-spanning segment. At 196 to 216 (FCLFGSPDNGDHDNWGNLAAA) the chain is on the extracellular side. The helical; Pore-forming intramembrane region spans 217–236 (FFTLFSLATVDGWTDLQKQL). The Extracellular segment spans residues 237-242 (DNREFA). A helical membrane pass occupies residues 243–268 (LSRAFTIIFILLASFIFLNMFVGVMI). Topologically, residues 269–398 (MHTEDSIRKF…PQSLEKVDEK (130 aa)) are cytoplasmic.

The protein belongs to the cation channel sperm-associated (TC 1.A.1.19) family. As to quaternary structure, component of the CatSper complex or CatSpermasome composed of the core pore-forming members CATSPER1, CATSPER2, CATSPER3 and CATSPER4 as well as auxiliary members CATSPERB, CATSPERG, CATSPERD, CATSPERE, CATSPERZ, C2CD6/CATSPERT, TMEM249, TMEM262 and EFCAB9. HSPA1 may be an additional auxiliary complex member. The core complex members CATSPER1, CATSPER2, CATSPER3 and CATSPER4 form a heterotetrameric channel. The auxiliary CATSPERB, CATSPERG, CATSPERD and CATSPERE subunits form a pavilion-like structure over the pore which stabilizes the complex through interactions with CATSPER4, CATSPER3, CATSPER1 and CATSPER2 respectively. TMEM262/CATSPERH interacts with CATSPERB, further stabilizing the complex. C2CD6/CATSPERT interacts at least with CATSPERD and is required for targeting the CatSper complex in the flagellar membrane. Testis-specific.

It localises to the cell projection. The protein localises to the cilium. It is found in the flagellum membrane. The catalysed reaction is Ca(2+)(in) = Ca(2+)(out). The CatSper calcium channel is indirectly activated by extracellular progesterone and prostaglandins following the sequence: progesterone &gt; PGF1-alpha = PGE1 &gt; PGA1 &gt; PGE2 &gt;&gt; PGD2. The CatSper calcium channel is directly inhibited by endocannabinoid 2-arachidonoylglycerol (2AG). Indirect activation by progesterone takes place via the following mechanism: progesterone binds and activates the acylglycerol lipase ABHD2, which in turn mediates hydrolysis of 2AG inhibitor, relieving inhibition of the CatSper channel. The primary effect of progesterone activation is to shift voltage dependence towards more physiological, negative membrane potentials; it is not mediated by metabotropic receptors and second messengers. Sperm capacitation enhances the effect of progesterone by providing additional negative shift. Also activated by the elevation of intracellular pH. In terms of biological role, pore-forming subunit of the CatSper complex, a sperm-specific voltage-gated calcium channel that plays a central role in calcium-dependent physiological responses essential for successful fertilization, such as sperm hyperactivation, acrosome reaction and chemotaxis towards the oocyte. The polypeptide is Cation channel sperm-associated protein 3 (CATSPER3) (Homo sapiens (Human)).